The primary structure comprises 709 residues: Rho guanine nucleotide exchange factor 16 (709 aa).

Position 2 is an N-acetylalanine (Ala-2). A phosphoserine mark is found at Ser-6, Ser-41, and Ser-107. The disordered stretch occupies residues 22–70 (ELRLDAGGNPASGLPMVRGSPRVRDDAAFQPQVPAPPQPRPPGHEEPWP). The disordered stretch occupies residues 114 to 146 (SREAARRDPKLLPAPSFSLDDMDVDKDPGGMLR). Phosphoserine is present on residues Ser-174, Ser-191, and Ser-208. Residues 180 to 246 (LAEEPSQPHT…ESSSPEGTQK (67 aa)) are disordered. Basic residues predominate over residues 191–207 (SPAKNKKTLGRKRGHKG). Thr-226 bears the Phosphothreonine mark. A phosphoserine mark is found at Ser-227, Ser-230, and Ser-240. A required for RHOG activation and mediates interaction with EPHA2 region spans residues 275–481 (LDQLSTEERK…MERMEQMYTL (207 aa)). Residues 284 to 468 (KRQEAMFEIL…SKLVRQCNEG (185 aa)) form the DH domain. One can recognise a PH domain in the interval 501 to 620 (WLLKRGELFL…WIVALTHSER (120 aa)). The region spanning 629 to 689 (GDLPQVEITK…PEDFARFITS (61 aa)) is the SH3 domain. The PDZ-binding motif motif lies at 707–709 (TDV).

Interacts with ELMO2, EPHA2, RAC1 and RHOG; mediates activation of RAC1 by EPHA2. Interacts with TAX1BP3 (via PDZ domain). May interact with CDC42; stimulated by HPV16 E6.

The protein localises to the cytoplasm. In terms of biological role, guanyl-nucleotide exchange factor of the RHOG GTPase stimulating the exchange of RHOG-associated GDP for GTP. May play a role in chemotactic cell migration by mediating the activation of RAC1 by EPHA2. May also activate CDC42 and mediate activation of CDC42 by the viral protein HPV16 E6. The polypeptide is Rho guanine nucleotide exchange factor 16 (ARHGEF16) (Homo sapiens (Human)).